We begin with the raw amino-acid sequence, 231 residues long: Small ribosomal subunit protein uS3 (231 aa).

The KH type-2 domain occupies 39 to 107 (VREFLKEKLK…PAQINIAEVR (69 aa)).

The protein belongs to the universal ribosomal protein uS3 family. In terms of assembly, part of the 30S ribosomal subunit. Forms a tight complex with proteins S10 and S14.

In terms of biological role, binds the lower part of the 30S subunit head. Binds mRNA in the 70S ribosome, positioning it for translation. The chain is Small ribosomal subunit protein uS3 from Colwellia psychrerythraea (strain 34H / ATCC BAA-681) (Vibrio psychroerythus).